Reading from the N-terminus, the 100-residue chain is Large ribosomal subunit protein uL23c (100 aa).

This sequence belongs to the universal ribosomal protein uL23 family. Part of the 50S ribosomal subunit.

It localises to the plastid. The protein resides in the chloroplast. Functionally, binds to 23S rRNA. The sequence is that of Large ribosomal subunit protein uL23c (rpl23) from Euglena gracilis.